We begin with the raw amino-acid sequence, 372 residues long: Cytochrome b (372 aa).

Transmembrane regions (helical) follow at residues 25–45, 69–90, 105–125, and 170–190; these read FGSMLLACLMLQIMTGFFLAI, WIMQNLHTISASLFFICIYTHI, WLSGTALLVTLMATAFFGYVL, and FFALHFILPFIIISLSSVHII. Heme b-binding residues include H75 and H89. 2 residues coordinate heme b: H174 and H188. H193 provides a ligand contact to a ubiquinone. 4 consecutive transmembrane segments (helical) span residues 218–238, 280–300, 312–332, and 339–358; these read YKDMLMITSMITLLLLILSFS, LGGTLALLLSVMILTTTPFTH, LSQILFWTLIATFITITWTAS, and FITISQTTSIFYFSFFILTP.

Belongs to the cytochrome b family. As to quaternary structure, the cytochrome bc1 complex contains 3 respiratory subunits (MT-CYB, CYC1 and UQCRFS1), 2 core proteins (UQCRC1 and UQCRC2) and probably 6 low-molecular weight proteins. The cofactor is heme b.

The protein localises to the mitochondrion inner membrane. In terms of biological role, component of the ubiquinol-cytochrome c reductase complex (complex III or cytochrome b-c1 complex) that is part of the mitochondrial respiratory chain. The b-c1 complex mediates electron transfer from ubiquinol to cytochrome c. Contributes to the generation of a proton gradient across the mitochondrial membrane that is then used for ATP synthesis. The sequence is that of Cytochrome b (MT-CYB) from Naja kaouthia (Monocled cobra).